A 463-amino-acid chain; its full sequence is Sugar transporter ERD6-like 7 (463 aa).

12 helical membrane passes run Trp-26–Ala-46, Leu-69–Ala-89, Ala-103–Leu-123, Leu-126–Ile-146, Thr-157–Val-177, Val-181–Pro-201, Val-264–Phe-284, Leu-299–Val-319, Leu-327–Tyr-347, Ala-357–Met-377, Val-396–Phe-416, and Gly-426–Val-446.

Belongs to the major facilitator superfamily. Sugar transporter (TC 2.A.1.1) family.

The protein resides in the membrane. In terms of biological role, sugar transporter. This Arabidopsis thaliana (Mouse-ear cress) protein is Sugar transporter ERD6-like 7.